The primary structure comprises 291 residues: Phosphatidylglycerol--prolipoprotein diacylglyceryl transferase (291 aa).

Helical transmembrane passes span 21 to 41 (VSLH…MWLA), 60 to 80 (LLYA…VLFY), 96 to 116 (WDGG…MIIF), 130 to 150 (FIAP…FING), 198 to 218 (SQLY…NLFI), 225 to 245 (GSVS…VEFF), and 260 to 280 (ISMG…MMVW). Arg-143 lines the a 1,2-diacyl-sn-glycero-3-phospho-(1'-sn-glycerol) pocket.

The protein belongs to the Lgt family.

The protein localises to the cell inner membrane. The enzyme catalyses L-cysteinyl-[prolipoprotein] + a 1,2-diacyl-sn-glycero-3-phospho-(1'-sn-glycerol) = an S-1,2-diacyl-sn-glyceryl-L-cysteinyl-[prolipoprotein] + sn-glycerol 1-phosphate + H(+). The protein operates within protein modification; lipoprotein biosynthesis (diacylglyceryl transfer). Its function is as follows. Catalyzes the transfer of the diacylglyceryl group from phosphatidylglycerol to the sulfhydryl group of the N-terminal cysteine of a prolipoprotein, the first step in the formation of mature lipoproteins. In Klebsiella pneumoniae (strain 342), this protein is Phosphatidylglycerol--prolipoprotein diacylglyceryl transferase.